Here is a 460-residue protein sequence, read N- to C-terminus: Kynurenine 3-monooxygenase (460 aa).

Residues V13, 32–34 (DFR), and A53 contribute to the FAD site. Residues R83 and Y97 each contribute to the L-kynurenine site. Residues R109, L133, Y195, D314, and 325 to 328 (QGMN) each bind FAD. Positions 373 and 408 each coordinate L-kynurenine.

The protein belongs to the aromatic-ring hydroxylase family. KMO subfamily. It depends on FAD as a cofactor.

The protein localises to the mitochondrion outer membrane. It catalyses the reaction L-kynurenine + NADPH + O2 + H(+) = 3-hydroxy-L-kynurenine + NADP(+) + H2O. The protein operates within cofactor biosynthesis; NAD(+) biosynthesis; quinolinate from L-kynurenine: step 1/3. Its function is as follows. Catalyzes the hydroxylation of L-kynurenine (L-Kyn) to form 3-hydroxy-L-kynurenine (L-3OHKyn). Required for synthesis of quinolinic acid. This Saccharomyces cerevisiae (strain ATCC 204508 / S288c) (Baker's yeast) protein is Kynurenine 3-monooxygenase.